We begin with the raw amino-acid sequence, 368 residues long: Phospho-N-acetylmuramoyl-pentapeptide-transferase (368 aa).

A run of 9 helical transmembrane segments spans residues 23-43 (YLTF…IFAG), 72-92 (VPTM…FLWA), 98-118 (HVWL…IDDY), 139-159 (VTLG…SVLL), 170-190 (LSVD…TAVS), 201-221 (GLAA…AYLC), 238-258 (AGEV…FLWF), 281-301 (VIAL…VFFV), and 345-365 (KIVI…LMTL).

Belongs to the glycosyltransferase 4 family. MraY subfamily. It depends on Mg(2+) as a cofactor.

It is found in the cell inner membrane. It catalyses the reaction UDP-N-acetyl-alpha-D-muramoyl-L-alanyl-gamma-D-glutamyl-meso-2,6-diaminopimeloyl-D-alanyl-D-alanine + di-trans,octa-cis-undecaprenyl phosphate = di-trans,octa-cis-undecaprenyl diphospho-N-acetyl-alpha-D-muramoyl-L-alanyl-D-glutamyl-meso-2,6-diaminopimeloyl-D-alanyl-D-alanine + UMP. Its pathway is cell wall biogenesis; peptidoglycan biosynthesis. In terms of biological role, catalyzes the initial step of the lipid cycle reactions in the biosynthesis of the cell wall peptidoglycan: transfers peptidoglycan precursor phospho-MurNAc-pentapeptide from UDP-MurNAc-pentapeptide onto the lipid carrier undecaprenyl phosphate, yielding undecaprenyl-pyrophosphoryl-MurNAc-pentapeptide, known as lipid I. This Chlorobaculum tepidum (strain ATCC 49652 / DSM 12025 / NBRC 103806 / TLS) (Chlorobium tepidum) protein is Phospho-N-acetylmuramoyl-pentapeptide-transferase.